A 2410-amino-acid chain; its full sequence is MALRDTAGVPPLLQGYSIVEWPDLTCDRHPSPTPYTSTQPLSSFNVQSRGSLLLAAISRMLGAYCGASDILLAVQVPNKRDYVFVRVNWSDNETWQEVAARTASQTRKTKSKLLVGDIRRAFELPDKQNPCPVLVRFTPSEEPSYFSDFPAVFIFDAKKSSLTLSAPKSLLHPSINDQLLSQIISLYHHAGANPKTPVSSNPTFPSHLTSVYDRLPEEDISNAYPHIPLVKFATEYLERRAKTNPHDIAVRWFPELSIDDSNLPSETSTYEELDRKASQLGRWLVTRGLAPEDRVAVCLSRDLIFHAAFFGIMRAGGCYVPIDPELPDERKAYIARDSGAKFVLTTSELSSQDLFGSSTIYVDEPEVANAIDEQDGGTFNIATPEGLGYMLYTSGTTGNPKGCLLTNHGLAQAIIALSSTAADVRMKDIREGRYLAVASIAFDVHLAETIVPMALGMPLLSAPRSQLLENLPQYVKLLGITHLGIVPSLIEATLNASKDNEGGLALRYIASGGEKMSDSILDKWANHPQVRLANFYGPSEVTIGCCARYMDSNTPRANIGRPLANVSGYVVDADLNILPRGGVGELVVEGPLVGRGYHGRPDLTEKVFLEWPEKGRWAYRTGDLVRMMPDSTLEILGRIDTQIKVRGVRIESEGISAIVRKAEVPSADMVLDATTVLAKHPALGSEQLVSFVTWDSTVPVSTRKSLRPSLSIPPRGFLKSIRSICNKELASYMRPNHVIPLNWLPLSSNGKTDTKILVELFKNLDIAQLASLISSEDDVSVSRDCTPLEAEVFEIVQRHAPSYAQRPHPELNIFECGLDSMGVIRFAADLKLTFGKAIPATEIMKKPALQDIAQLVHVSTMNHSLVGTPLPTIDAATHKHLSSIYSNDIEDILPPFPVQEGVLARSVEDTSLYVQHVILHLDSGTSMSQLQRSWESVIAAHPILRTVFYVDRSVWQVVFKSFNLPNSWSDRSLSVKTVEEFRARFYSRFAGEITKDINRNLSSIPPFRLAYFRCTGFNVLVLSIHHALYDGTSLPVLLRDVENSYLGLERVQKASLRAILAEISKHDLALAQQFWRDSFREFEWPRPAFRQGSNALASSVKYLSVHFTQKLSVIREVANKKQVTLQALLSFTFAYLIGSRLYDSNDVAFGVIRSGRMLPVDNVDVALCPTITVLPMRVRLGDANSTLVNIQNGISTMTEHEHVPLGKVQNWLRPGEPLFEVLFSVSVQQQEESKIWRPCDYEPPAADYALSVEAVVNVHDDTLIVRAAWLDGLITQDHVADLLHGFEKVTLTLDKGEELPLPSRRSPEPVRKVNDDEDPSAQVLLDPVVVADLQQTICDFLEIPTAILTNRVSFISLGLDSIKAVGLAKRIRALGYDVSSTEILRASTLKRLARVVSNNKQKKEEPYEHYAQLVRQVEGYISKSEVQLSPEDEVKIIPSTALQSGMLSQTVGSDGRLYVHAFPLTLSPGVDVQRLKSAWEAAAEKIDILRTSFHFIPDNGTWVQVIHSFNELKWSIQNLEGFVNVTSAVKSFVESIECTDEFAFSTPPFWLRVFTPLKGPSVLALVMHHALYDGGSVNSLLDVVQRIYRGESISYPVQFADLLPDFFRQELQNLERTLLPLHSLPSSDPYHISIRQVEVKDVDLKRLLTETEVTLQCLLQGALAQSLAILTRSADVVFGNVVSGRVGRGTEEVVGPILNTIPCRVHISDHDSVDALLQSIHRFNMEAASWQQASLRSIQKALMVDRIWDCLFTFQPLAPPPQAAIWSLDIEEHEDIHIQYPLHVEIEQNKDGFSVRCACQSNVLDKAGLLNFMDTLSNTVQQFVANPKERIGRTFSVPSPSNTDPTPTTVVAPAPATVQAGIIHPVLLSAIRDFAPDAEVTFDTPLPALGIDSITAIQISGKCRRSGLRLTATQILNSSTVKDLVLQATEIKATAKSTQVSDGVFKPLSSEEKDSIARRFADDAKYIENISVTTAGMKWAIGGWQRTNGSLFQYLFTFKLPDDVDHARFKNAWHMFIRRHELMRSTFATAPGGTEPRIVTFSKDFKFDHWAEIVVDDAVFYRRLLGKMKEMVSDPVPISRPPVRAALFRSDKQSYFIFHIHHFQYDAWSMQVLLNDLSSIYYDQEPWAVTDLRAFTSLFDPNEERLSVQRRFWEKALSPSFKPSLLPSLLNEVQGPLATPTGQPQLIMVPGALTNVSRYEEQARKLGVTLQTVLLAAWAQVQANRSRTSASTFGVWQVSRSGHIDGIERLAVPCVNVLPIHVKVGGSLVEVTKRIQVDLSERLSQPVIEHSDLVNISKWTGMSGETPIFNVNVNVVKLPVTLKRDGLVEPVKAPYYIPRIAVPTVTPTLDRLAVSPLCQNDVVVDIIVYEESDSILMSIEAVDNIMTEGQAKDIIQEWASVVSTTLSYKD.

The tract at residues 237–646 (LERRAKTNPH…GRIDTQIKVR (410 aa)) is adenylation 1. The 78-residue stretch at 783-860 (RDCTPLEAEV…DIAQLVHVST (78 aa)) folds into the Carrier 1 domain. Ser820 is subject to O-(pantetheine 4'-phosphoryl)serine. The segment at 891–1260 (DILPPFPVQE…SVEAVVNVHD (370 aa)) is condensation 1. The segment at 1298-1317 (ELPLPSRRSPEPVRKVNDDE) is disordered. A compositionally biased stretch (basic and acidic residues) spans 1305-1314 (RSPEPVRKVN). Residues 1324-1400 (LLDPVVVADL…RLARVVSNNK (77 aa)) enclose the Carrier 2 domain. Ser1361 bears the O-(pantetheine 4'-phosphoryl)serine mark. A condensation 2 region spans residues 1436 to 1839 (IIPSTALQSG…RIGRTFSVPS (404 aa)). A Carrier 3 domain is found at 1858–1932 (VQAGIIHPVL…DLVLQATEIK (75 aa)). An O-(pantetheine 4'-phosphoryl)serine modification is found at Ser1893. The segment at 1992–2315 (FQYLFTFKLP…TPIFNVNVNV (324 aa)) is condensation 3.

Belongs to the NRP synthetase family.

The protein operates within siderophore biosynthesis. Its function is as follows. Nonribosomal peptide synthase; part of the gene cluster that mediates the biosynthesis of coprinoferrin, an acylated tripeptide hydroxamate siderophore. The biosynthesis of coprinoferrin depends on the hydroxylation of ornithine to N(5)-hydroxyornithine, catalyzed by the monooxygenase cpf2. The second step, the acylation of N(5)-hydroxy-L-ornithine to yield N(5)-hexanoyl-N(5)-hydroxyl-L-ornithine is catalyzed by a not yet identified acyltransferase. Finally, assembly of coprinoferrin is catalyzed by the nonribosomal peptide synthase (NRPS) cpf1 via amide bond formation between three N(5)-hexanoyl-N(5)-hydroxyl-L-ornithine molecules to release the linear trimer. Interestingly, proteins seemingly not directly related to biosynthesis, such as transcription factors, replication factors, and autophagy-related proteins, are conserved among the clusters homologous to the coprinoferrin cluster, suggesting that the cluster may also play developmental and cell biological functions. This Coprinopsis cinerea (strain Okayama-7 / 130 / ATCC MYA-4618 / FGSC 9003) (Inky cap fungus) protein is Coprinoferrin synthetase.